The sequence spans 305 residues: Elongation factor Ts (305 aa).

The tract at residues 79-82 (TDFV) is involved in Mg(2+) ion dislocation from EF-Tu.

This sequence belongs to the EF-Ts family.

The protein resides in the cytoplasm. Functionally, associates with the EF-Tu.GDP complex and induces the exchange of GDP to GTP. It remains bound to the aminoacyl-tRNA.EF-Tu.GTP complex up to the GTP hydrolysis stage on the ribosome. This chain is Elongation factor Ts, found in Brucella anthropi (strain ATCC 49188 / DSM 6882 / CCUG 24695 / JCM 21032 / LMG 3331 / NBRC 15819 / NCTC 12168 / Alc 37) (Ochrobactrum anthropi).